The chain runs to 290 residues: Nucleoid occlusion protein (290 aa).

Residues 153 to 172 (EALAQRLGKGQSTVANKLRL) constitute a DNA-binding region (H-T-H motif).

The protein belongs to the ParB family.

It is found in the cytoplasm. It localises to the nucleoid. Functionally, effects nucleoid occlusion by binding relatively nonspecifically to DNA and preventing the assembly of the division machinery in the vicinity of the nucleoid, especially under conditions that disturb the cell cycle. It helps to coordinate cell division and chromosome segregation by preventing the formation of the Z ring through the nucleoid, which would cause chromosome breakage. The protein is Nucleoid occlusion protein of Bacillus mycoides (strain KBAB4) (Bacillus weihenstephanensis).